The sequence spans 229 residues: Deleted in azoospermia-like (229 aa).

Residues 47 to 128 enclose the RRM domain; sequence NTLFVGGIDM…PAIMKERSSR (82 aa). The DAZ domain occupies 172–198; that stretch reads PYSYSSPPGIMVPQVPMNYAQTTYAYQ.

This sequence belongs to the RRM DAZ family. Testis and ovary specific. In ovary, it is localized in the cortex of oocytes. At the onset of embryogenesis, maternal product is located at the vegetal pole, before migrating toward blastomeres through cytoplasmic streams as early embryogenesis proceededs.

It localises to the cytoplasm. Functionally, RNA-binding protein involved in gametogenesis in both males and females. Acts by binding to the 3'-UTR of mRNA, specifically recognizing GUU triplets, and promoting the translation of key transcripts. Establishes oocyte polarity through interaction with Bucky ball (BUC). Interacts with Bucky ball (BUC) mRNA to mediate Balbiani body formation and oocyte polarity during early oogenesis. This chain is Deleted in azoospermia-like (dazl), found in Danio rerio (Zebrafish).